The following is a 960-amino-acid chain: Dynamin-like GTPase OPA1, mitochondrial (960 aa).

The N-terminal 87 residues, 1 to 87 (MWRLRRAAVA…IKYGYQPRRN (87 aa)), are a transit peptide targeting the mitochondrion. Over 88 to 96 (FWPARLATR) the chain is Mitochondrial matrix. Residues 97-113 (LLKLRYLILGSAVGGGY) traverse the membrane as a helical segment. Topologically, residues 114–770 (TAKKTFDQWK…NAIENMVGPD (657 aa)) are mitochondrial intermembrane. 2 consecutive short sequence motifs (LQQQIQ motif) follow at residues 181-186 (DFFTSG) and 217-222 (QLQEEL). Residues 210–254 (SDKEKIDQLQEELLHTQLKYQRILERLEKENKELRKLVLQKDDKG) adopt a coiled-coil conformation. Position 228 is an N6-acetyllysine (lysine 228). Residues 235 to 240 (RLEKEN) carry the LQQQIQ motif motif. A Dynamin-type G domain is found at 285–561 (QDHLPRVVVV…FWKMVRESVE (277 aa)). The tract at residues 295–302 (GDQSAGKT) is G1 motif. GTP-binding residues include serine 298, glycine 300, lysine 301, threonine 302, serine 303, and glycine 317. Residue threonine 302 coordinates Mg(2+). Residues 321–324 (MMTR) are G2 motif. 2 residues coordinate Mg(2+): threonine 323 and aspartate 398. The G3 motif stretch occupies residues 398–401 (DLPG). Residues 467-470 (TKVD) are G4 motif. GTP contacts are provided by lysine 468, aspartate 470, threonine 503, glycine 506, and asparagine 507. Positions 501-504 (VVTG) are G5 motif. 2 stalk region regions span residues 589 to 836 (DRNE…IKDT) and 874 to 928 (CNDV…IKLL). A paddle region region spans residues 736 to 856 (SDKQQWDAAI…KTALNHCNLC (121 aa)). An intramembrane segment occupies 771-781 (WKKRWLYWKNR). At 782–960 (TQEQCVHNET…AFIEALHQEK (179 aa)) the chain is on the mitochondrial intermembrane side. A disulfide bridge connects residues cysteine 856 and cysteine 874. Positions 895–960 (RQQLTNTEVR…AFIEALHQEK (66 aa)) form a coiled coil.

Belongs to the TRAFAC class dynamin-like GTPase superfamily. Dynamin/Fzo/YdjA family. In terms of assembly, oligomeric complex consisting of membrane-bound and soluble forms of OPA1. Interacts with RCC1L; RCC1L acts as a guanine nucleotide exchange factor (GEF) for OPA1 by exchanging bound GDP for free GTP. Interacts with CHCHD3 and IMMT; these interactions occur preferentially with soluble OPA1 forms. Interacts with PRELID1. In terms of processing, cleaved by OMA1 or YME1L downstream of the transmembrane region in response to different signals to generate soluble forms. Cleaved by OMA1 at position S1 following stress conditions, generating the short soluble form (Dynamin-like GTPase OPA1, short form; S-OPA1). AFG3L2 is involved in the regulation of OMA1-dependent processing of OPA1. PARL-dependent proteolytic processing releases an antiapoptotic soluble form not required for mitochondrial fusion. Cleavage at position S2 by YME1L is required to mediate oxidative phosphorylation (OXPHOS)-induced mitochondrial fusion. Cleavage occurs in the sequence motif Leu-Gln-Gln-Gln-Ile-Gln (LQQQIQ). Post-translationally, cleavage at position S2 by YME1L is required to mediate oxidative phosphorylation (OXPHOS)-induced mitochondrial fusion. Cleavage occurs in the sequence motif Leu-Gln-Gln-Gln-Ile-Gln (LQQQIQ). Cleavage at position S3 by YME1L is required for membrane tubulation. In terms of processing, cleavage at position S3 by YME1L is required for membrane tubulation. As to expression, highly expressed in retina. Also expressed in brain, testis, heart and skeletal muscle. Low levels of all isoforms expressed in a variety of tissues. Expressed in retina, skeletal muscle, heart, lung, ovary, colon, thyroid gland, leukocytes and fetal brain. Low levels of all isoforms expressed in a variety of tissues. In terms of tissue distribution, isoform 2 expressed in colon, liver, kidney, thyroid gland and leukocytes.

The protein resides in the mitochondrion inner membrane. Its subcellular location is the mitochondrion intermembrane space. It catalyses the reaction GTP + H2O = GDP + phosphate + H(+). Its activity is regulated as follows. Activated by guanine nucleotide exchange factor RCC1L. Functionally, dynamin-related GTPase that is essential for normal mitochondrial morphology by mediating fusion of the mitochondrial inner membranes, regulating cristae morphology and maintaining respiratory chain function. Exists in two forms: the transmembrane, long form (Dynamin-like GTPase OPA1, long form; L-OPA1), which is tethered to the inner mitochondrial membrane, and the short soluble form (Dynamin-like GTPase OPA1, short form; S-OPA1), which results from proteolytic cleavage and localizes in the intermembrane space. Both forms (L-OPA1 and S-OPA1) cooperate to catalyze the fusion of the mitochondrial inner membrane. The equilibrium between L-OPA1 and S-OPA1 is essential: excess levels of S-OPA1, produced by cleavage by OMA1 following loss of mitochondrial membrane potential, lead to an impaired equilibrium between L-OPA1 and S-OPA1, inhibiting mitochondrial fusion. The balance between L-OPA1 and S-OPA1 also influences cristae shape and morphology. Involved in remodeling cristae and the release of cytochrome c during apoptosis. Proteolytic processing by PARL in response to intrinsic apoptotic signals may lead to disassembly of OPA1 oligomers and release of the caspase activator cytochrome C (CYCS) into the mitochondrial intermembrane space. Acts as a regulator of T-helper Th17 cells, which are characterized by cells with fused mitochondria with tight cristae, by mediating mitochondrial membrane remodeling: OPA1 is required for interleukin-17 (IL-17) production. Its role in mitochondrial morphology is required for mitochondrial genome maintenance. Constitutes the transmembrane long form (L-OPA1) that plays a central role in mitochondrial inner membrane fusion and cristae morphology. L-OPA1 and the soluble short form (S-OPA1) form higher-order helical assemblies that coordinate the fusion of mitochondrial inner membranes. Inner membrane-anchored L-OPA1 molecules initiate membrane remodeling by recruiting soluble S-OPA1 to rapidly polymerize into a flexible cylindrical scaffold encaging the mitochondrial inner membrane. Once at the membrane surface, the formation of S-OPA1 helices induce bilayer curvature. OPA1 dimerization through the paddle region, which inserts into cardiolipin-containing membrane, promotes GTP hydrolysis and the helical assembly of a flexible OPA1 lattice on the membrane, which drives membrane curvature and mitochondrial fusion. Plays a role in the maintenance and remodeling of mitochondrial cristae, some invaginations of the mitochondrial inner membrane that provide an increase in the surface area. Probably acts by forming helical filaments at the inside of inner membrane tubes with the shape and dimensions of crista junctions. The equilibrium between L-OPA1 and S-OPA1 influences cristae shape and morphology: increased L-OPA1 levels promote cristae stacking and elongated mitochondria, while increased S-OPA1 levels correlated with irregular cristae packing and round mitochondria shape. In terms of biological role, constitutes the soluble short form (S-OPA1) generated by cleavage by OMA1, which plays a central role in mitochondrial inner membrane fusion and cristae morphology. The transmembrane long form (L-OPA1) and the S-OPA1 form higher-order helical assemblies that coordinate the fusion of mitochondrial inner membranes. Inner membrane-anchored L-OPA1 molecules initiate membrane remodeling by recruiting soluble S-OPA1 to rapidly polymerize into a flexible cylindrical scaffold encaging the mitochondrial inner membrane. Once at the membrane surface, the formation of S-OPA1 helices induce bilayer curvature. OPA1 dimerization through the paddle region, which inserts into cardiolipin-containing membrane, promotes GTP hydrolysis and the helical assembly of a flexible OPA1 lattice on the membrane, which drives membrane curvature and mitochondrial fusion. Excess levels of S-OPA1 produced by cleavage by OMA1 following stress conditions that induce loss of mitochondrial membrane potential, lead to an impaired equilibrium between L-OPA1 and S-OPA1, thereby inhibiting mitochondrial fusion. Involved in mitochondrial safeguard in response to transient mitochondrial membrane depolarization by mediating flickering: cleavage by OMA1 leads to excess production of S-OPA1, preventing mitochondrial hyperfusion. Plays a role in the maintenance and remodeling of mitochondrial cristae, some invaginations of the mitochondrial inner membrane that provide an increase in the surface area. Probably acts by forming helical filaments at the inside of inner membrane tubes with the shape and dimensions of crista junctions. The equilibrium between L-OPA1 and S-OPA1 influences cristae shape and morphology: increased L-OPA1 levels promote cristae stacking and elongated mitochondria, while increased S-OPA1 levels correlated with irregular cristae packing and round mitochondria shape. Its function is as follows. Coexpression of isoform 1 with shorter alternative products is required for optimal activity in promoting mitochondrial fusion. Functionally, isoforms that contain the alternative exon 4b are required for mitochondrial genome maintenance, possibly by anchoring the mitochondrial nucleoids to the inner mitochondrial membrane. This is Dynamin-like GTPase OPA1, mitochondrial from Homo sapiens (Human).